The primary structure comprises 868 residues: Leucine--tRNA ligase (868 aa).

The 'HIGH' region motif lies at 42 to 52 (PYPSGKLHMGH). Residues 627–631 (KMAKS) carry the 'KMSKS' region motif. Lys630 lines the ATP pocket.

It belongs to the class-I aminoacyl-tRNA synthetase family.

It localises to the cytoplasm. The catalysed reaction is tRNA(Leu) + L-leucine + ATP = L-leucyl-tRNA(Leu) + AMP + diphosphate. This Pseudomonas fluorescens (strain ATCC BAA-477 / NRRL B-23932 / Pf-5) protein is Leucine--tRNA ligase.